The following is a 349-amino-acid chain: 4-hydroxy-2-oxovalerate aldolase 1 (349 aa).

Positions 9-261 (ITVHDMTLRD…ATGVDVFRIQ (253 aa)) constitute a Pyruvate carboxyltransferase domain. A substrate-binding site is contributed by 17-18 (RD). Aspartate 18 is a binding site for Mn(2+). The active-site Proton acceptor is the histidine 21. Serine 171 and histidine 200 together coordinate substrate. Mn(2+) is bound by residues histidine 200 and histidine 202. Position 291 (tyrosine 291) interacts with substrate.

The protein belongs to the 4-hydroxy-2-oxovalerate aldolase family.

It catalyses the reaction (S)-4-hydroxy-2-oxopentanoate = acetaldehyde + pyruvate. The chain is 4-hydroxy-2-oxovalerate aldolase 1 from Methylibium petroleiphilum (strain ATCC BAA-1232 / LMG 22953 / PM1).